The following is a 548-amino-acid chain: Chaperonin GroEL (548 aa).

Residues 30–33 (TLGP), Lys-51, 87–91 (DGTTT), Gly-415, 479–481 (NAA), and Asp-495 contribute to the ATP site.

This sequence belongs to the chaperonin (HSP60) family. Forms a cylinder of 14 subunits composed of two heptameric rings stacked back-to-back. Interacts with the co-chaperonin GroES.

The protein localises to the cytoplasm. It catalyses the reaction ATP + H2O + a folded polypeptide = ADP + phosphate + an unfolded polypeptide.. Functionally, together with its co-chaperonin GroES, plays an essential role in assisting protein folding. The GroEL-GroES system forms a nano-cage that allows encapsulation of the non-native substrate proteins and provides a physical environment optimized to promote and accelerate protein folding. This chain is Chaperonin GroEL, found in Pseudomonas fluorescens (strain SBW25).